Here is a 544-residue protein sequence, read N- to C-terminus: CTP synthase (544 aa).

Positions 1–266 (MIRYIFITGG…DSEVLSHFGI (266 aa)) are amidoligase domain. Residue S13 coordinates CTP. S13 serves as a coordination point for UTP. ATP is bound by residues 14–19 (SLGKGI) and D71. 2 residues coordinate Mg(2+): D71 and E140. CTP-binding positions include 147 to 149 (DIE), 187 to 192 (KTKPTQ), and K223. UTP is bound by residues 187 to 192 (KTKPTQ) and K223. 239–241 (RDV) contacts ATP. A Glutamine amidotransferase type-1 domain is found at 292 to 543 (TIGLVGKYTD…IAAAVKQSRL (252 aa)). G355 provides a ligand contact to L-glutamine. Residue C382 is the Nucleophile; for glutamine hydrolysis of the active site. L-glutamine is bound by residues 383–386 (YGMQ), E406, and R471. Active-site residues include H516 and E518.

It belongs to the CTP synthase family. Homotetramer.

It carries out the reaction UTP + L-glutamine + ATP + H2O = CTP + L-glutamate + ADP + phosphate + 2 H(+). The catalysed reaction is L-glutamine + H2O = L-glutamate + NH4(+). The enzyme catalyses UTP + NH4(+) + ATP = CTP + ADP + phosphate + 2 H(+). Its pathway is pyrimidine metabolism; CTP biosynthesis via de novo pathway; CTP from UDP: step 2/2. Its activity is regulated as follows. Allosterically activated by GTP, when glutamine is the substrate; GTP has no effect on the reaction when ammonia is the substrate. The allosteric effector GTP functions by stabilizing the protein conformation that binds the tetrahedral intermediate(s) formed during glutamine hydrolysis. Inhibited by the product CTP, via allosteric rather than competitive inhibition. Functionally, catalyzes the ATP-dependent amination of UTP to CTP with either L-glutamine or ammonia as the source of nitrogen. Regulates intracellular CTP levels through interactions with the four ribonucleotide triphosphates. This chain is CTP synthase, found in Hyphomonas neptunium (strain ATCC 15444).